The primary structure comprises 542 residues: Protein OS-9 homolog (542 aa).

Residues 1-21 form the signal peptide; that stretch reads MQAKIIYALSAISALIPLGSS. Asparagine 52 and asparagine 74 each carry an N-linked (GlcNAc...) asparagine glycan. Cystine bridges form between cysteine 70/cysteine 258, cysteine 117/cysteine 130, cysteine 193/cysteine 227, and cysteine 208/cysteine 239. The MRH domain maps to 115 to 241; the sequence is ERCIFYQAGF…QVTIPELCNL (127 aa). Residues tryptophan 125, glutamine 137, aspartate 194, arginine 200, glutamate 223, and tyrosine 229 each coordinate a mannooligosaccharide derivative. The N-linked (GlcNAc...) asparagine glycan is linked to asparagine 380. The interval 497-528 is disordered; it reads NARMDDDESTSHTTRDIGEAGSQTTGNTESEV. Basic and acidic residues predominate over residues 505–514; that stretch reads STSHTTRDIG. Residues 517 to 528 are compositionally biased toward polar residues; that stretch reads GSQTTGNTESEV. The Prevents secretion from ER signature appears at 539–542; the sequence is HDEL.

Belongs to the OS-9 family. As to quaternary structure, homodimer. Component of the HRD1 ubiquitin ligase complex which contains the E3 ligase HRD1, its cofactors HRD3, USA1 and DER1, substrate recruiting factor YOS9 and CDC48-binding protein UBX2. Within the complex, interacts (via N-terminus) with HRD3. In ERAD-L, HRD3 and YOS9 jointly bind misfolded glycoproteins in the endoplasmic reticulum (ER) lumen. Movement of ERAD-L substrates through the ER membrane is facilitated by HRD1 and DER1 which have lateral gates facing each other and which distort the membrane region between the lateral gates, making it much thinner than a normal phospholipid bilayer. Substrates insert into the membrane as a hairpin loop with one strand interacting with DER1 and the other with HRD1. The HRD1 complex interacts with the heterotrimeric CDC48-NPL4-UFD1 ATPase complex which is recruited by UBX2 via its interaction with CDC48 and which moves ubiquitinated substrates to the cytosol for targeting to the proteasome. Interacts with KAR2 and EMP47. Interacts with misfolded ER lumenal proteins like PCR1. Interacts with the GPI-anchored proteins GAS1 and MKC7.

The protein localises to the endoplasmic reticulum membrane. Functionally, lectin involved in the quality control of the secretory pathway. As a member of the endoplasmic reticulum-associated degradation lumenal (ERAD-L) surveillance system, targets misfolded endoplasmic reticulum lumenal glycoproteins for degradation. The recognition of targets is N-glycan specific. Functions in recruiting misfolded protein substrates in conjunction with HRD3. This is Protein OS-9 homolog (YOS9) from Saccharomyces cerevisiae (strain ATCC 204508 / S288c) (Baker's yeast).